The chain runs to 690 residues: Eukaryotic translation initiation factor 3 subunit B (690 aa).

Basic and acidic residues predominate over residues 1–11 (MAKKKSEEHSG). A disordered region spans residues 1-36 (MAKKKSEEHSGADANDSDYTEEPNFDDPPNFVDNIS). Over residues 15 to 25 (NDSDYTEEPNF) the composition is skewed to acidic residues. The 85-residue stretch at 57 to 141 (SVVVVDNMPK…YTFAVNLFTD (85 aa)) folds into the RRM domain. 5 WD repeats span residues 207–246 (TRER…KIQK), 292–331 (GDGM…LLDL), 334–369 (IKIP…TLME), 442–484 (EIRE…KPSL), and 530–575 (PDHF…IRRT). The stretch at 614–645 (QKDRLRLTRASKELLEKRSQLRETFMEYRNKR) forms a coiled coil.

The protein belongs to the eIF-3 subunit B family. Component of the eukaryotic translation initiation factor 3 (eIF-3) complex. The eIF-3 complex interacts with pix. Interacts with mxt.

Its subcellular location is the cytoplasm. In terms of biological role, RNA-binding component of the eukaryotic translation initiation factor 3 (eIF-3) complex, which is involved in protein synthesis of a specialized repertoire of mRNAs and, together with other initiation factors, stimulates binding of mRNA and methionyl-tRNAi to the 40S ribosome. The eIF-3 complex specifically targets and initiates translation of a subset of mRNAs involved in cell proliferation. This is Eukaryotic translation initiation factor 3 subunit B from Drosophila virilis (Fruit fly).